A 534-amino-acid chain; its full sequence is Cytokinin dehydrogenase 5 (534 aa).

The signal sequence occupies residues 1–20 (MAWCLVFMVFLIYCLISTVG). The 185-residue stretch at 59–243 (TSAEPLAVFH…TRARIALEPA (185 aa)) folds into the FAD-binding PCMH-type domain. The FAD site is built by Ala93, Gly95, and Gly97. A Pros-8alpha-FAD histidine modification is found at His98. Ser99 and Gln103 together coordinate FAD. Asn152 carries an N-linked (GlcNAc...) asparagine glycan. FAD contacts are provided by Asp167, Ser172, Ser178, Ile182, and Ile233. N-linked (GlcNAc...) asparagine glycosylation occurs at Asn256. FAD is bound by residues Tyr484 and Gln522.

The protein belongs to the oxygen-dependent FAD-linked oxidoreductase family. Monomer. FAD serves as cofactor. As to expression, expressed in inflorescence meristems.

The protein resides in the secreted. It localises to the extracellular space. It carries out the reaction N(6)-dimethylallyladenine + A + H2O = 3-methyl-2-butenal + adenine + AH2. Its function is as follows. Catalyzes the oxidation of cytokinins, a family of N(6)-substituted adenine derivatives that are plant hormones, where the substituent is an isopentenyl group. The chain is Cytokinin dehydrogenase 5 (CKX5) from Oryza sativa subsp. japonica (Rice).